A 118-amino-acid polypeptide reads, in one-letter code: Large ribosomal subunit protein bL20 (118 aa).

It belongs to the bacterial ribosomal protein bL20 family. In terms of assembly, part of the 50S ribosomal subunit. Contacts proteins L13 and L21.

Binds directly to 23S rRNA, probably serving to organize its structure. The protein is Large ribosomal subunit protein bL20 (rplT) of Deinococcus radiodurans (strain ATCC 13939 / DSM 20539 / JCM 16871 / CCUG 27074 / LMG 4051 / NBRC 15346 / NCIMB 9279 / VKM B-1422 / R1).